The chain runs to 198 residues: Protein GrpE (198 aa).

Basic and acidic residues predominate over residues 1 to 21; sequence MMKKAEDPLQDREGTIQEHTE. A disordered region spans residues 1 to 56; sequence MMKKAEDPLQDREGTIQEHTEGQAGTAAADQSAAVETPESRIAGLEREVQAEKEQN. Residues 22-34 are compositionally biased toward low complexity; it reads GQAGTAAADQSAA. The segment covering 44–56 has biased composition (basic and acidic residues); it reads GLEREVQAEKEQN.

This sequence belongs to the GrpE family. As to quaternary structure, homodimer.

The protein resides in the cytoplasm. Functionally, participates actively in the response to hyperosmotic and heat shock by preventing the aggregation of stress-denatured proteins, in association with DnaK and GrpE. It is the nucleotide exchange factor for DnaK and may function as a thermosensor. Unfolded proteins bind initially to DnaJ; upon interaction with the DnaJ-bound protein, DnaK hydrolyzes its bound ATP, resulting in the formation of a stable complex. GrpE releases ADP from DnaK; ATP binding to DnaK triggers the release of the substrate protein, thus completing the reaction cycle. Several rounds of ATP-dependent interactions between DnaJ, DnaK and GrpE are required for fully efficient folding. In Chlorobium luteolum (strain DSM 273 / BCRC 81028 / 2530) (Pelodictyon luteolum), this protein is Protein GrpE.